The chain runs to 526 residues: Outer capsid protein VP5 (526 aa).

The tract at residues 1 to 42 (MGKIIKSLSRFGKKVGNALTSNTAKKIYSTIGKAAERFAESE) is involved in membrane permeabilization.

It belongs to the orbivirus VP5 family.

Its subcellular location is the virion. VP5 protein is one of the two proteins (with VP2) which constitute the virus particle outer capsid. Acts as a membrane permeabilization protein that mediates release of viral particles from endosomal compartments into the cytoplasm. Permeabilization activity is probably negatively regulated by VP2 and is triggered by endosomal degradation of VP2 and exposure to low pH. This chain is Outer capsid protein VP5 (Segment-6), found in Antilocapra americana (Pronghorn).